A 530-amino-acid polypeptide reads, in one-letter code: uncharacterized protein (530 aa).

Polar residues-rich tracts occupy residues 60–74 (LNES…SSTP) and 92–103 (GQGTSRPLPTLS). Disordered regions lie at residues 60 to 103 (LNES…PTLS) and 121 to 155 (ASST…GLGN). Positions 131–142 (PDPRDAPREGSF) are enriched in basic and acidic residues.

This is an uncharacterized protein from Mus musculus (Mouse).